A 776-amino-acid chain; its full sequence is Peregrinol diphosphate synthase CPS1, chloroplastic (776 aa).

A chloroplast-targeting transit peptide spans 1–17 (MASTPTLNLSITTPFVR). Lys-238 provides a ligand contact to substrate. Mg(2+) contacts are provided by Asp-371 and Asp-373. The DXDD motif signature appears at 371–374 (DIDD). Lys-457 contributes to the substrate binding site.

The protein belongs to the terpene synthase family. It depends on Mg(2+) as a cofactor. As to expression, present in both leaves and flowers, with higher levels in leaves.

The protein resides in the plastid. It is found in the chloroplast. The enzyme catalyses peregrinol diphosphate = (2E,6E,10E)-geranylgeranyl diphosphate + H2O. It participates in secondary metabolite biosynthesis; terpenoid biosynthesis. Involved in the biosynthesis of labdane-type diterpenoid including marrubiin and other labdane-related furanoid diterpenoids with potential applications as anti-diabetics, analgesics or vasorelaxants. Terpene synthase that produces peregrinol diphosphate from geranylgeranyl diphosphate (GGPP). This Marrubium vulgare (White horehound) protein is Peregrinol diphosphate synthase CPS1, chloroplastic.